The following is a 121-amino-acid chain: MNDIIFLNGMRFYGYHGVLAAENDIGQIFVVDITLKVDLSYAGQSDDVKDTVNYGEVYKDVKSIVEGPRSCLIEHLAERIAKHINSHYNRVMETKVRITKENPPIPGHYDGVGIEIVREND.

Substrate is bound by residues Glu-22, Tyr-54, and 73 to 74 (IE). The active-site Proton donor/acceptor is the Lys-100.

This sequence belongs to the DHNA family. As to quaternary structure, homooctamer. Four molecules assemble into a ring, and two rings come together to give a cylinder with a hole of at least 13 a diameter.

It carries out the reaction 7,8-dihydroneopterin = 6-hydroxymethyl-7,8-dihydropterin + glycolaldehyde. The catalysed reaction is 7,8-dihydroneopterin = 7,8-dihydromonapterin. The protein operates within cofactor biosynthesis; tetrahydrofolate biosynthesis; 2-amino-4-hydroxy-6-hydroxymethyl-7,8-dihydropteridine diphosphate from 7,8-dihydroneopterin triphosphate: step 3/4. In terms of biological role, catalyzes the conversion of 7,8-dihydroneopterin to 6-hydroxymethyl-7,8-dihydropterin. Can also catalyze the epimerization of carbon 2' of dihydroneopterin to dihydromonapterin. This is Dihydroneopterin aldolase (folB) from Staphylococcus epidermidis (strain ATCC 35984 / DSM 28319 / BCRC 17069 / CCUG 31568 / BM 3577 / RP62A).